The primary structure comprises 1928 residues: MELPWTALFLSTVLLGLSCQGSDWESDRNFISAAGPLTNDLVLNLNYPPGKQGSDVVSGNTDHLLCQQPLPSFLSQYFSSLRASQVTHYKVLLSWAQLLPTGSSKNPDQEAVQCYRQLLQSLKDAQLEPMVVLCHQTPPTSSAIQREGAFADLFADYATLAFQSFGDLVEIWFTFSDLEKVIMDLPHKDLKASALQTLSNAHRRAFEIYHRKFSSQGGKLSVVLKAEDIPELLPDPALAALVQGSVDFLSLDLSYECQSVATLPQKLSELQNLEPKVKVFIYTLKLEDCPATGTSPSSLLISLLEAINKDQIQTVGFDVNAFLSCTSNSEESPSCSLTDSLALQTEQQQETAVPSSPGSAYQRVWAAFANQSREERDAFLQDVFPEGFLWGISTGAFNVEGGWAEGGRGPSIWDHYGNLNAAEGQATAKVASDSYHKPASDVALLRGIRAQVYKFSISWSGLFPLGQKSTPNRQGVAYYNKLIDRLLDSHIEPMATLFHWDLPQALQEQGGWQNESVVEAFLDYAAFCFSTFGDRVKLWVTFHEPWVMSYAGYGTGQHAPAISDPGMASFKVAHLILKAHARTWHLYDLHHRLQQQGRVGIVLNSDLAEPLDRKSPQDLAAAERFLHFMLGWFAHPIFVDGDYPTTSAQIQHINQQCGHPLAQLPEFTEAEKRLLKGSADFLGLSHYTSRLISKAGRQTCTSSYDNIGGFSQHVDPEWPQTASPWIRVVPWGIRRLLRFASMEYTKGKLPIFLAGNGMPVGEEADLFDDSVRVNYFNWYINEVLKAVKEDLVDVRSYIVRSLIDGYEGPLGFSQRFGLYHVNFNDSSRPRTPRKSAYLFTSIIEKNGFSAKKVKRNPLPVRADFTSRARVTDSLPSEVPSKAKISVEKFSKQPRFERDLFYDGRFRDDFLWGVSSSPYQIEGGWNADGKGPSIWDNFTHTPGNGVKDNATGDVACDSYHQLDADLNILRTLKVKSYRFSISWSRIFPTGRNSTINKQGVDYYNRLIDSLVDNNIFPMVTLFHWDLPQALQDIGGWENPSLIELFDSYADYCFKTFGDRVKFWMTFNEPWCHVVLGYSSGIFPPSVQEPGWLPYKVSHIVIKAHARVYHTYDEKYRSEQKGVISLSLNTHWAEPKDPGLQRDVEAADRMLQFTMGWFAHPIFKNGDYPDVMKWTVGNRSELQHLASSRLPTFTEEEKNYVRGTADVFCHNTYTSVFVQHSTPRLNPPSYDDDMELKLIEMNSSTGVMHQDVPWGTRRLLNWIKEEYGNIPIYITENGQGLENPTLDDTERIFYHKTYINEALKAYKLDGVDLRGYSAWTLMDDFEWLLGYTMRFGLYYVDFNHVSRPRTARASARYYPDLIANNGMPLAREDEFLYGEFPKGFIWSAASASYQVEGAWRADGKGLSIWDTFSHTPLRIGNDDNGDVACDSYHKIAEDVVALQNLGVSHYRFSIAWSRILPDGTTKFINEAGLSYYVRFIDALLAAGITPQVTIYHWDLPQALQDVGGWENETIVQRFKEYADVLFQRLGDRVKFWITLNEPFVIAAQGYGTGVSAPGISFRPGTAPYIAGHNLIKAHAEAWHLYNDVYRARQGGTISITISSDWGEPRDPTNREHVEAARSYVQFMGGWFAHPIFKNGDYPEVMKTRIRDRSLGAGLNKSRLPEFTESEKSRIKGTFDFFGFNHNTTVLAYNLDYPAAFSSFDADRGVASIADSSWPVSGSFWLKVTPFGFRRILNWLKEEYNNPPIYVTENGVSRRGEPELNDTDRIYYLRSYINEALKAVHDKVDLRGYTVWSIMDNFEWATGFAERFGVHFVNRSDPSLPRIPRASAKFYATIVRCNGFPDPAQGPHPCLQQPEDAAPTASPVQSEVPFLGLMLGIAEAQTALYVLFALLLLGACSLAFLTYNTGRRSKQGNAQPSQHQLSPISSF.

The N-terminal stretch at 1–21 is a signal peptide; that stretch reads MELPWTALFLSTVLLGLSCQG. Residues 22–867 constitute a propeptide, XBetaGly; the sequence is SDWESDRNFI…LPVRADFTSR (846 aa). Residues 22–1883 are Extracellular-facing; that stretch reads SDWESDRNFI…LMLGIAEAQT (1862 aa). Residues 46–289 are glycosyl hydrolase-1 1; Region I; it reads NYPPGKQGSD…FIYTLKLEDC (244 aa). A glycosyl hydrolase-1 2; Region II region spans residues 364 to 856; sequence VWAAFANQSR…GFSAKKVKRN (493 aa). N370, N514, N824, N936, N948, N991, and N1037 each carry an N-linked (GlcNAc...) asparagine glycan. Residues 904–1367 form a glycosyl hydrolase-1 3; Region III. Phlorizin hydrolase/Glycosylceramidase activity region; that stretch reads RFRDDFLWGV…DLIANNGMPL (464 aa). The active-site Proton donor; for phlorizin hydrolase/Glycosylceramidase activity is E1067. N1176 and N1240 each carry an N-linked (GlcNAc...) asparagine glycan. The active-site Nucleophile; for phlorizin hydrolase/Glycosylceramidase activity is the E1274. N-linked (GlcNAc...) asparagine glycosylation is found at N1281 and N1509. A glycosyl hydrolase-1 4; Region IV. Lactase activity region spans residues 1374–1847; sequence LYGEFPKGFI…CNGFPDPAQG (474 aa). Residue E1539 is the Proton donor; for lactase activity of the active site. N-linked (GlcNAc...) asparagine glycans are attached at residues N1657 and N1684. E1750 acts as the Nucleophile; for lactase activity in catalysis. 2 N-linked (GlcNAc...) asparagine glycosylation sites follow: N1762 and N1815. A helical membrane pass occupies residues 1884–1902; it reads ALYVLFALLLLGACSLAFL. Topologically, residues 1903–1928 are cytoplasmic; that stretch reads TYNTGRRSKQGNAQPSQHQLSPISSF.

This sequence belongs to the glycosyl hydrolase 1 family. Homodimer. Post-translationally, N-glycosylated. In terms of tissue distribution, intestine.

The protein localises to the apical cell membrane. The enzyme catalyses lactose + H2O = beta-D-galactose + D-glucose. The catalysed reaction is phlorizin + H2O = phloretin + beta-D-glucose. It carries out the reaction D-cellobiose + H2O = beta-D-glucose + D-glucose. It catalyses the reaction quercetin 4'-O-beta-D-glucoside + H2O = quercetin + beta-D-glucose. The enzyme catalyses quercetin 3-O-beta-D-glucoside + H2O = quercetin + beta-D-glucose. The catalysed reaction is kaempferol 3-O-beta-D-glucoside + H2O = kaempferol + beta-D-glucose. It carries out the reaction luteolin 7-O-beta-D-glucoside + H2O = luteolin + beta-D-glucose. It catalyses the reaction luteolin 4'-O-beta-D-glucoside + H2O = luteolin + beta-D-glucose. The enzyme catalyses (2S)-naringenin 7-O-beta-D-glucoside + H2O = (2S)-naringenin + beta-D-glucose. The catalysed reaction is eriodictyol-7-O-beta-D-glucoside + H2O = (S)-eriodictyol + beta-D-glucose. It carries out the reaction apigenin 7-O-beta-D-glucoside + H2O = apigenin + beta-D-glucose. It catalyses the reaction daidzein 7-O-beta-D-glucoside + H2O = daidzein + beta-D-glucose + H(+). The enzyme catalyses genistein 7-O-beta-D-glucoside + H2O = genistein + beta-D-glucose. The catalysed reaction is a beta-D-galactosyl-N-acylsphingosine + H2O = a ceramide + beta-D-galactose.. It carries out the reaction beta-D-glucosyl-(1&lt;-&gt;1')-N-hexadecanoylsphing-4-enine + H2O = N-hexadecanoylsphing-4-enine + beta-D-glucose. It catalyses the reaction beta-D-galactosyl-(1&lt;-&gt;1')-N-hexadecanoylsphing-4-enine + H2O = beta-D-galactose + N-hexadecanoylsphing-4-enine. The enzyme catalyses beta-D-galactosyl-(1&lt;-&gt;1')-N-hexadecanoylsphinganine + H2O = N-hexadecanoylsphinganine + beta-D-galactose. The catalysed reaction is beta-D-glucosyl-(1&lt;-&gt;1')-N-hexadecanoylsphinganine + H2O = N-hexadecanoylsphinganine + beta-D-glucose. Functionally, broad specificity glycosidase of the intestinal brush border membrane that hydrolyzes lactose, the main sugar in mammalian milk, to produce D-glucose and D-galactose. The mature protein is composed of two domains that catalyze the hydrolysis of beta-glucopyranosides and beta-galactopyranosides, with a preference for hydrophilic aglycones (in lactose and cellobiose) for one domain and hydrophobic aglycones (in phlorizin and glycosylceramides) for the other. The polypeptide is Lactase/phlorizin hydrolase (Rattus norvegicus (Rat)).